The chain runs to 155 residues: Acyl-CoA-binding domain-containing protein 3 (155 aa).

Residues 3–88 (LQEDFEEYAE…VKQLQEEAAA (86 aa)) enclose the ACB domain. An acyl-CoA-binding positions include Lys-15, 30–34 (YGLYK), Lys-56, and Tyr-75.

The protein belongs to the ACBP family. As to expression, highly expressed in leaves. Expressed at low levels in roots and seeds.

The protein localises to the cytoplasm. Its subcellular location is the cytosol. Binds medium- and long-chain acyl-CoA esters with high affinity. Can interact in vitro with linolenoyl-CoA. Binds phosphatidic acid (PA) and phosphatidylcholine (PC) in vitro. May play a role in the biosynthesis of phospholipids. The protein is Acyl-CoA-binding domain-containing protein 3 of Oryza sativa subsp. japonica (Rice).